A 191-amino-acid polypeptide reads, in one-letter code: UPF0149 protein VV1_1551 (191 aa).

The protein belongs to the UPF0149 family.

This is UPF0149 protein VV1_1551 from Vibrio vulnificus (strain CMCP6).